The sequence spans 782 residues: LINE-1 type transposase domain-containing protein 1 (782 aa).

3 disordered regions span residues 1 to 30 (MSGV…TATS), 90 to 200 (QEGD…GGAG), and 338 to 397 (NKGT…SAEE). 2 stretches are compositionally biased toward basic and acidic residues: residues 11 to 27 (LQKE…ERKT) and 95 to 107 (ISER…KVEE). At Ser136 the chain carries Phosphoserine. Basic and acidic residues-rich tracts occupy residues 143–158 (SLER…HGRC) and 183–194 (EENRLKAPKESP). The segment covering 347–396 (GEEEEISETQGEETSEGETSELGEEEGSESEEEEESSESEEEEESSESAE) has biased composition (acidic residues). Phosphoserine is present on residues Ser407, Ser409, Ser442, Ser478, Ser490, Ser559, and Ser567.

The protein belongs to the transposase 22 family.

In Mus musculus (Mouse), this protein is LINE-1 type transposase domain-containing protein 1 (L1td1).